The sequence spans 421 residues: Phosphatidylinositol 5-phosphate 4-kinase type-2 gamma (421 aa).

Alanine 2 bears the N-acetylalanine mark. Phosphoserine is present on serine 26. Residues 43–420 form the PIPK domain; sequence AADPLVGVFL…RFLDFITNIF (378 aa). The interval 69–75 is required for interaction with PIP5K1A; the sequence is VMLLPDD. Serine 349 bears the Phosphoserine mark.

Interacts with PIP5K1A; the interaction inhibits PIP5K1A kinase activity. In terms of processing, phosphorylated, phosphorylation is induced by EGF.

It is found in the endoplasmic reticulum. The protein localises to the cytoplasm. The enzyme catalyses a 1,2-diacyl-sn-glycero-3-phospho-(1D-myo-inositol-5-phosphate) + ATP = a 1,2-diacyl-sn-glycero-3-phospho-(1D-myo-inositol-4,5-bisphosphate) + ADP + H(+). It catalyses the reaction 1,2-dihexadecanoyl-sn-glycero-3-phospho-(1D-myo-inositol-5-phosphate) + ATP = 1,2-dihexadecanoyl-sn-glycero-3-phospho-(1D-myo-inositol-4,5-bisphosphate) + ADP + H(+). It carries out the reaction 1,2-dihexadecanoyl-sn-glycero-3-phospho-(1D-myo-inositol-5-phosphate) + GTP = 1,2-dihexadecanoyl-sn-glycero-3-phospho-(1D-myo-inositol-4,5-bisphosphate) + GDP + H(+). In terms of biological role, phosphatidylinositol 5-phosphate 4-kinase with low enzymatic activity. May be a GTP sensor, has higher GTP-dependent kinase activity than ATP-dependent kinase activity. PIP4Ks negatively regulate insulin signaling through a catalytic-independent mechanism. They interact with PIP5Ks and suppress PIP5K-mediated PtdIns(4,5)P2 synthesis and insulin-dependent conversion to PtdIns(3,4,5)P3. This Pongo abelii (Sumatran orangutan) protein is Phosphatidylinositol 5-phosphate 4-kinase type-2 gamma (PIP4K2C).